A 412-amino-acid chain; its full sequence is Multifunctional CCA protein (412 aa).

ATP-binding residues include Gly-8 and Arg-11. Gly-8 and Arg-11 together coordinate CTP. Mg(2+) contacts are provided by Asp-21 and Asp-23. Residues Arg-91, Arg-137, and Arg-140 each contribute to the ATP site. CTP-binding residues include Arg-91, Arg-137, and Arg-140. The HD domain maps to 228 to 329 (TGIHTLMTLS…VKLFDSIDAW (102 aa)).

The protein belongs to the tRNA nucleotidyltransferase/poly(A) polymerase family. Bacterial CCA-adding enzyme type 1 subfamily. In terms of assembly, monomer. Can also form homodimers and oligomers. The cofactor is Mg(2+). Ni(2+) is required as a cofactor.

It carries out the reaction a tRNA precursor + 2 CTP + ATP = a tRNA with a 3' CCA end + 3 diphosphate. It catalyses the reaction a tRNA with a 3' CCA end + 2 CTP + ATP = a tRNA with a 3' CCACCA end + 3 diphosphate. Catalyzes the addition and repair of the essential 3'-terminal CCA sequence in tRNAs without using a nucleic acid template. Adds these three nucleotides in the order of C, C, and A to the tRNA nucleotide-73, using CTP and ATP as substrates and producing inorganic pyrophosphate. tRNA 3'-terminal CCA addition is required both for tRNA processing and repair. Also involved in tRNA surveillance by mediating tandem CCA addition to generate a CCACCA at the 3' terminus of unstable tRNAs. While stable tRNAs receive only 3'-terminal CCA, unstable tRNAs are marked with CCACCA and rapidly degraded. This is Multifunctional CCA protein from Escherichia coli O6:H1 (strain CFT073 / ATCC 700928 / UPEC).